The primary structure comprises 148 residues: Small ribosomal subunit protein eS19G (148 aa).

The protein belongs to the eukaryotic ribosomal protein eS19 family.

Elimination of the ALEP-1 gene from all somatic cells in its fully activate state may represent an alternative way to gene regulation. The protein is Small ribosomal subunit protein eS19G (RPS19G) of Ascaris suum (Pig roundworm).